A 132-amino-acid chain; its full sequence is MDSRTGELITARQAENGVFIWEIENPLYFKINQVEDMQYTRTRIYSVQIRFNHNLRRALDLHKAYLNFQVWTTSMTASGSNYLARFRQLVLLYLDRLGVISINNVIRSVRFATDRSYVNYVLENHSIKYKFY.

This sequence belongs to the geminiviridae replication enhancer protein family. In terms of assembly, homooligomer. Interacts with the replication-associated protein (REP). Interacts with host proliferating cell nuclear antigen (PCNA). Interacts with host retinoblastoma-related protein 1 (RBR1), and may thereby deregulate the host cell cycle. Oligomerization and interaction with PCNA are necessary for optimal replication enhancement.

In terms of biological role, increases viral DNA accumulation. Enhances infectivity and symptom expression. The chain is Replication enhancer protein from Potato yellow mosaic virus (isolate Venezuela) (PYMV).